A 454-amino-acid polypeptide reads, in one-letter code: tRNA modification GTPase MnmE (454 aa).

(6S)-5-formyl-5,6,7,8-tetrahydrofolate contacts are provided by Arg23, Glu80, and Lys120. Residues 216–377 enclose the TrmE-type G domain; the sequence is GMKVVIAGRP…LRNHLKQSMG (162 aa). Asn226 contributes to the K(+) binding site. Residues 226 to 231, 245 to 251, 270 to 273, 335 to 338, and 358 to 360 contribute to the GTP site; these read NAGKSS, TDIAGTT, DTAG, NKAD, and SAR. Position 230 (Ser230) interacts with Mg(2+). Thr245, Ile247, and Thr250 together coordinate K(+). Thr251 contributes to the Mg(2+) binding site. Lys454 is a binding site for (6S)-5-formyl-5,6,7,8-tetrahydrofolate.

The protein belongs to the TRAFAC class TrmE-Era-EngA-EngB-Septin-like GTPase superfamily. TrmE GTPase family. In terms of assembly, homodimer. Heterotetramer of two MnmE and two MnmG subunits. Requires K(+) as cofactor.

It localises to the cytoplasm. In terms of biological role, exhibits a very high intrinsic GTPase hydrolysis rate. Involved in the addition of a carboxymethylaminomethyl (cmnm) group at the wobble position (U34) of certain tRNAs, forming tRNA-cmnm(5)s(2)U34. The protein is tRNA modification GTPase MnmE of Salmonella typhimurium (strain LT2 / SGSC1412 / ATCC 700720).